A 457-amino-acid chain; its full sequence is Multidrug resistance protein MdtK (457 aa).

The next 12 membrane-spanning stretches (helical) occupy residues 11 to 31 (LLAL…MGFV), 53 to 73 (IWLP…PVIA), 93 to 113 (WLAG…GYII), 127 to 147 (AVGY…FQVA), 160 to 180 (GMVM…IFIY), 189 to 209 (GGVG…LAMV), 243 to 263 (LPIA…ALLV), 276 to 296 (IALN…AAVT), 314 to 334 (AART…IFTV), 350 to 370 (VVTL…SDSI), 387 to 407 (IFYI…YILA), and 418 to 438 (PAGF…MMML).

This sequence belongs to the multi antimicrobial extrusion (MATE) (TC 2.A.66.1) family. MdtK subfamily.

Its subcellular location is the cell inner membrane. Multidrug efflux pump that functions probably as a Na(+)/drug antiporter. In Escherichia coli (strain SE11), this protein is Multidrug resistance protein MdtK.